We begin with the raw amino-acid sequence, 306 residues long: Glutaminase (306 aa).

Serine 64, asparagine 115, glutamate 159, asparagine 166, tyrosine 190, tyrosine 242, and valine 260 together coordinate substrate.

The protein belongs to the glutaminase family. In terms of assembly, homotetramer.

It carries out the reaction L-glutamine + H2O = L-glutamate + NH4(+). The polypeptide is Glutaminase (Vibrio atlanticus (strain LGP32) (Vibrio splendidus (strain Mel32))).